An 80-amino-acid polypeptide reads, in one-letter code: Protein FAM229B (80 aa).

The segment at M1 to L44 is disordered.

It belongs to the FAM229 family.

The polypeptide is Protein FAM229B (FAM229B) (Homo sapiens (Human)).